The chain runs to 378 residues: MSAPDKQQPPHGGGTGGGGGAGGQAMDPAAAGPTKAKKTNAGVRRPEKPPYSYIALIVMAIQSSPSKRLTLSEIYQFLQARFPFFRGAYQGWKNSVRHNLSLNECFIKLPKGLGRPGKGHYWTIDPASEFMFEEGSFRRRPRGFRRKCQALKPVYSMVNGLGFNHLPDTYGFQGSGGLSCAPNSLALEGGLGMMNGHLAGNVDGMALPSHSVPHLPSNGGHSYMGGCGGSAAGEYPHHDSSVPASPLLPAGAGGVMEPHAVYSSSAAAWPPAASAALNSGASYIKQQPLSPCNPAANPLSGSISTHSLEQPYLHQNSHNGPAELQGIPRYHSQSPSMCDRKEFVFSFNAMASSSMHTTGGGSYYHQQVTYQDIKPCVM.

A disordered region spans residues 1–45 (MSAPDKQQPPHGGGTGGGGGAGGQAMDPAAAGPTKAKKTNAGVRR). Residues 11-23 (HGGGTGGGGGAGG) show a composition bias toward gly residues. Residues 24-42 (QAMDPAAAGPTKAKKTNAG) are compositionally biased toward low complexity. A DNA-binding region (fork-head) is located at residues 47–138 (EKPPYSYIAL…EFMFEEGSFR (92 aa)).

As to expression, expressed primarily in lung in alveolar type II pneumocyte cells, and to a lesser extent in placenta, stomach, intestine and colon.

It is found in the nucleus. In terms of biological role, probable transcription activator for a number of lung-specific genes. This Mus musculus (Mouse) protein is Forkhead box protein F1 (Foxf1).